Consider the following 209-residue polypeptide: MTLASQIATQLLDIKAVYLKPEDPFTWASGIKSPIYTDNRVTLSYPKTRDLIENGFVETIRAHFPEVEVIAGTATAGIPHGAIIADKMTLPFAYIRSKPKDHGAGNQIEGRVLKGQKMVIIEDLISTGGSVLDAAAAASREGADVLGVVAIFTYELPKASQNFKEAGIKLITLSNYTELIAVAKLQGYITNDGLHLLKKFKEDQVNWQQ.

5-phospho-alpha-D-ribose 1-diphosphate-binding positions include arginine 96, lysine 100, histidine 102, and glutamate 122–serine 130. Serine 126 is an orotate binding site.

Belongs to the purine/pyrimidine phosphoribosyltransferase family. PyrE subfamily. Homodimer. Mg(2+) is required as a cofactor.

It carries out the reaction orotidine 5'-phosphate + diphosphate = orotate + 5-phospho-alpha-D-ribose 1-diphosphate. It functions in the pathway pyrimidine metabolism; UMP biosynthesis via de novo pathway; UMP from orotate: step 1/2. Functionally, catalyzes the transfer of a ribosyl phosphate group from 5-phosphoribose 1-diphosphate to orotate, leading to the formation of orotidine monophosphate (OMP). This chain is Orotate phosphoribosyltransferase, found in Streptococcus pyogenes serotype M3 (strain ATCC BAA-595 / MGAS315).